Here is a 210-residue protein sequence, read N- to C-terminus: Eukaryotic translation initiation factor 2 subunit gamma (210 aa).

Positions 1–196 (IGHVAHGKST…HLVETITPPR (196 aa)) constitute a tr-type G domain. Residues 2–9 (GHVAHGKS) are G1. 5-10 (AHGKST) contributes to the GTP binding site. The segment at 30–34 (NITIK) is G2. The G3 stretch occupies residues 85-88 (DCPG). Residues 141–144 (NKID) and 174–176 (SAI) contribute to the GTP site. Residues 141 to 144 (NKID) are G4. Residues 174–176 (SAI) form a G5 region.

The protein belongs to the TRAFAC class translation factor GTPase superfamily. Classic translation factor GTPase family. EIF2G subfamily. As to quaternary structure, eukaryotic translation initiation factor 2 eIF2 is a heterotrimeric complex composed of an alpha, a beta and a gamma subunit. The factors eIF-1, eIF-2, eIF-3, TIF5/eIF-5 and methionyl-tRNAi form a multifactor complex (MFC) that may bind to the 40S ribosome.

The protein resides in the cytoplasm. It localises to the cytosol. It catalyses the reaction GTP + H2O = GDP + phosphate + H(+). Its function is as follows. As a subunit of eukaryotic initiation factor 2 eIF2, involved in the early steps of protein synthesis. In the presence of GTP, eIF-2 forms a ternary complex with initiator tRNA Met-tRNAi and then recruits the 40S ribosomal complex and initiation factors eIF-1, eIF-1A and eIF-3 to form the 43S pre-initiation complex (43S PIC), a step that determines the rate of protein translation. The 43S PIC binds to mRNA and scans downstream to the initiation codon, where it forms a 48S initiation complex by codon-anticodon base pairing. This leads to the displacement of eIF-1 to allow GTPase-activating protein (GAP) eIF-5-mediated hydrolysis of eIF2-bound GTP. Hydrolysis of GTP and release of Pi, which makes GTP hydrolysis irreversible, causes the release of the eIF-2-GDP binary complex from the 40S subunit, an event that is essential for the subsequent joining of the 60S ribosomal subunit to form an elongation-competent 80S ribosome. In order for eIF-2 to recycle and catalyze another round of initiation, the GDP bound to eIF-2 must be exchanged with GTP by way of a reaction catalyzed by GDP-GTP exchange factor (GEF) eIF-2B. The sequence is that of Eukaryotic translation initiation factor 2 subunit gamma from Spironucleus vortens.